We begin with the raw amino-acid sequence, 369 residues long: Glutamate 5-kinase (369 aa).

Lys-11 serves as a coordination point for ATP. Residues Ser-51, Asp-138, and Asn-150 each contribute to the substrate site. ATP is bound by residues 170-171 (TD) and 212-218 (TGGMATK). The region spanning 277–355 (NGTIVIDDGA…QDIYAVLGYE (79 aa)) is the PUA domain.

Belongs to the glutamate 5-kinase family.

Its subcellular location is the cytoplasm. It catalyses the reaction L-glutamate + ATP = L-glutamyl 5-phosphate + ADP. Its pathway is amino-acid biosynthesis; L-proline biosynthesis; L-glutamate 5-semialdehyde from L-glutamate: step 1/2. Functionally, catalyzes the transfer of a phosphate group to glutamate to form L-glutamate 5-phosphate. In Aliivibrio salmonicida (strain LFI1238) (Vibrio salmonicida (strain LFI1238)), this protein is Glutamate 5-kinase.